Here is a 1562-residue protein sequence, read N- to C-terminus: Neuralized-like protein 4 (1562 aa).

A compositionally biased stretch (gly residues) spans 1–42 (MAAGSGGSGGSGGGPGPGPGGGGGPSGSGSGPGSNGGLGSGG). Disordered stretches follow at residues 1-48 (MAAG…HPRT) and 207-236 (PEPG…LAEQ). 2 NHR domains span residues 41-207 (GGEL…VLPP) and 317-484 (ALLF…IVHN). The span at 207 to 224 (PEPGFSPPTPIPTPPLEP) shows a compositional bias: pro residues. Ser-502 is subject to Phosphoserine. NHR domains follow at residues 520–686 (RLLF…IVDD) and 716–884 (DLRF…ITNA). Positions 691-716 (PVPEPLPEGNNQVSPSSPSSGAGGSD) are disordered. At Ser-907 the chain carries Phosphoserine. The NHR 5 domain maps to 913–1086 (AHRFHSTCGK…PVRGVSIVSS (174 aa)). A disordered region spans residues 1086–1123 (STRLEESEGTQPPSPSSDTGSEGEEDDEGEEHGLGGQN). Over residues 1106–1115 (SEGEEDDEGE) the composition is skewed to acidic residues. The NHR 6 domain maps to 1131–1294 (TLEFLENHGK…QCEQVTIVNP (164 aa)).

As to quaternary structure, interacts with CCP110; this interaction propmotes CCP110 ubiquitination and degradation via the proteasome pathway. Via its interaction with CCP110, may indirectly interact with CEP97. Interacts with the E3 ubiquitin-protein ligase HERC2 and UBE3A. May interact with MAPK6 and hence mediate MAPK6 interaction with UBE3A. Interaction with UBE3A may be indirect and mediated by HERC2. Ubiquitinated; undergoes HERC2-dependent 'Lys-48' ubiquitination. This ubiquitination leads to proteasomal degradation. Widely expressed at high levels (including brain).

The protein resides in the cytoplasm. It localises to the cytoskeleton. It is found in the microtubule organizing center. The protein localises to the centrosome. Its subcellular location is the centriole. Promotes CCP110 ubiquitination and proteasome-dependent degradation. By counteracting accumulation of CP110, maintains normal centriolar homeostasis and preventing formation of ectopic microtubular organizing centers. This Homo sapiens (Human) protein is Neuralized-like protein 4 (NEURL4).